The chain runs to 128 residues: Small ribosomal subunit protein uS11 (128 aa).

It belongs to the universal ribosomal protein uS11 family. In terms of assembly, part of the 30S ribosomal subunit. Interacts with proteins S7 and S18. Binds to IF-3.

In terms of biological role, located on the platform of the 30S subunit, it bridges several disparate RNA helices of the 16S rRNA. Forms part of the Shine-Dalgarno cleft in the 70S ribosome. This is Small ribosomal subunit protein uS11 from Chromohalobacter salexigens (strain ATCC BAA-138 / DSM 3043 / CIP 106854 / NCIMB 13768 / 1H11).